The primary structure comprises 341 residues: HTH-type transcriptional repressor PurR (341 aa).

Residues 2 to 56 (ATIKDVAKHAGVSTTTVSHVINKTRFVAEDTKAAVWAAIKALNYSPSAVARSLKV) enclose the HTH lacI-type domain. The segment at residues 4-23 (IKDVAKHAGVSTTTVSHVIN) is a DNA-binding region (H-T-H motif). A DNA-binding region spans residues 48 to 56 (SAVARSLKV). Residues Tyr73, Arg190, Thr192, Phe221, and Asp275 each contribute to the hypoxanthine site.

In terms of assembly, homodimer.

It participates in purine metabolism; purine nucleotide biosynthesis [regulation]. Its function is as follows. Is the main repressor of the genes involved in the de novo synthesis of purine nucleotides, regulating purB, purC, purEK, purF, purHD, purL, purMN and guaBA expression. PurR is allosterically activated to bind its cognate DNA by binding the purine corepressors, hypoxanthine or guanine, thereby effecting transcription repression. In Photorhabdus laumondii subsp. laumondii (strain DSM 15139 / CIP 105565 / TT01) (Photorhabdus luminescens subsp. laumondii), this protein is HTH-type transcriptional repressor PurR.